The primary structure comprises 124 residues: Small ribosomal subunit protein uS12 (124 aa).

Position 89 is a 3-methylthioaspartic acid (aspartate 89). Lysine 108 carries the N6-acetyllysine modification.

The protein belongs to the universal ribosomal protein uS12 family. Part of the 30S ribosomal subunit. Contacts proteins S8 and S17. May interact with IF1 in the 30S initiation complex.

With S4 and S5 plays an important role in translational accuracy. In terms of biological role, interacts with and stabilizes bases of the 16S rRNA that are involved in tRNA selection in the A site and with the mRNA backbone. Located at the interface of the 30S and 50S subunits, it traverses the body of the 30S subunit contacting proteins on the other side and probably holding the rRNA structure together. The combined cluster of proteins S8, S12 and S17 appears to hold together the shoulder and platform of the 30S subunit. The chain is Small ribosomal subunit protein uS12 from Escherichia coli O139:H28 (strain E24377A / ETEC).